The following is a 348-amino-acid chain: Dihydroorotase (348 aa).

The Zn(2+) site is built by histidine 17 and histidine 19. Substrate-binding positions include 19–21 and asparagine 45; that span reads HLR. The Zn(2+) site is built by lysine 103, histidine 140, and histidine 178. Residue lysine 103 is modified to N6-carboxylysine. A substrate-binding site is contributed by histidine 140. Position 223 (leucine 223) interacts with substrate. Aspartate 251 provides a ligand contact to Zn(2+). The active site involves aspartate 251. Substrate contacts are provided by histidine 255 and alanine 267.

Belongs to the metallo-dependent hydrolases superfamily. DHOase family. Class II DHOase subfamily. In terms of assembly, homodimer. It depends on Zn(2+) as a cofactor.

The catalysed reaction is (S)-dihydroorotate + H2O = N-carbamoyl-L-aspartate + H(+). Its pathway is pyrimidine metabolism; UMP biosynthesis via de novo pathway; (S)-dihydroorotate from bicarbonate: step 3/3. Functionally, catalyzes the reversible cyclization of carbamoyl aspartate to dihydroorotate. The protein is Dihydroorotase of Salmonella heidelberg (strain SL476).